The chain runs to 422 residues: Protein krasavietz (422 aa).

The tract at residues 1-26 (MSQKTERPVLSGQRIKTRKRDEREKY) is disordered. Positions 244–415 (KLHKAQASQE…QSAEEESESE (172 aa)) constitute a W2 domain. Serine 407, serine 412, and serine 414 each carry phosphoserine.

This sequence belongs to the BZW family. Expressed in mushroom bodies.

In terms of biological role, may be involved in memory formation. The polypeptide is Protein krasavietz (kra) (Drosophila melanogaster (Fruit fly)).